Reading from the N-terminus, the 298-residue chain is Proton-activated chloride channel (298 aa).

Residues 1–12 are Cytoplasmic-facing; that stretch reads MPIGFNKACLKN. The helical transmembrane segment at 13 to 33 threads the bilayer; sequence VFTVILVLIYLALTAVAVFLA. The Extracellular portion of the chain corresponds to 34 to 245; that stretch reads YQTISDFMDK…RDPFIQQVKD (212 aa). Residues 246 to 266 traverse the membrane as a helical segment; the sequence is IVTANPWNTIAILCGVFMALF. Topologically, residues 267–298 are cytoplasmic; sequence KAADFAKLSIKWMIRIRKRHIRAKMREMNQIS.

It belongs to the proton-activated chloride channel family.

The protein resides in the cell membrane. The catalysed reaction is chloride(in) = chloride(out). In terms of biological role, chloride channel gated by pH that facilitates the entry of chloride ions into cells upon exposure to extracellular acidic pH. Displays channel activity with distinct kinetic properties compared to the human ortholog channel. The sequence is that of Proton-activated chloride channel from Danio rerio (Zebrafish).